Here is a 278-residue protein sequence, read N- to C-terminus: Digeranylgeranylglyceryl phosphate synthase (278 aa).

The next 8 helical transmembrane spans lie at 17 to 37 (MASF…LEMV), 40 to 60 (LIFA…LNDI), 91 to 111 (LLVF…LMAV), 129 to 149 (IIGN…GGIA), 153 to 173 (IDVT…REII), 204 to 224 (LLLV…FFGI), 226 to 246 (YLIS…PLLI), and 257 to 277 (SRNI…GSFF).

It belongs to the UbiA prenyltransferase family. DGGGP synthase subfamily. Requires Mg(2+) as cofactor.

Its subcellular location is the cell membrane. The enzyme catalyses sn-3-O-(geranylgeranyl)glycerol 1-phosphate + (2E,6E,10E)-geranylgeranyl diphosphate = 2,3-bis-O-(geranylgeranyl)-sn-glycerol 1-phosphate + diphosphate. It participates in membrane lipid metabolism; glycerophospholipid metabolism. Its function is as follows. Prenyltransferase that catalyzes the transfer of the geranylgeranyl moiety of geranylgeranyl diphosphate (GGPP) to the C2 hydroxyl of (S)-3-O-geranylgeranylglyceryl phosphate (GGGP). This reaction is the second ether-bond-formation step in the biosynthesis of archaeal membrane lipids. The polypeptide is Digeranylgeranylglyceryl phosphate synthase (Methanococcus maripaludis (strain C5 / ATCC BAA-1333)).